Reading from the N-terminus, the 102-residue chain is Acid shock protein (102 aa).

Residues 1–21 (MKKVLGLVVAAAMGLSSAAFA) form the signal peptide. Positions 22 to 41 (AETATTPAPTATTTKAAPAK) are enriched in low complexity. Residues 22-58 (AETATTPAPTATTTKAAPAKTTHHKKQHKAAPAQKAQ) constitute a propeptide that is removed on maturation. Residues 22–102 (AETATTPAPT…PAKPAAQPAA (81 aa)) are disordered. Residues 80–90 (AAKKHAGKHSH) show a composition bias toward basic residues. Low complexity predominate over residues 91–102 (QQPAKPAAQPAA).

It belongs to the Asr family. In terms of processing, proteolytic processing gives rise to the active protein.

It localises to the periplasm. Required for growth and/or survival at acidic conditions. In Escherichia coli (strain SE11), this protein is Acid shock protein.